The primary structure comprises 82 residues: ATP synthase subunit c (82 aa).

2 helical membrane passes run 6-26 (AAAS…GPGI) and 57-77 (LAFM…LLFA).

This sequence belongs to the ATPase C chain family. In terms of assembly, F-type ATPases have 2 components, F(1) - the catalytic core - and F(0) - the membrane proton channel. F(1) has five subunits: alpha(3), beta(3), gamma(1), delta(1), epsilon(1). F(0) has four main subunits: a(1), b(1), b'(1) and c(10-14). The alpha and beta chains form an alternating ring which encloses part of the gamma chain. F(1) is attached to F(0) by a central stalk formed by the gamma and epsilon chains, while a peripheral stalk is formed by the delta, b and b' chains.

It is found in the cell inner membrane. F(1)F(0) ATP synthase produces ATP from ADP in the presence of a proton or sodium gradient. F-type ATPases consist of two structural domains, F(1) containing the extramembraneous catalytic core and F(0) containing the membrane proton channel, linked together by a central stalk and a peripheral stalk. During catalysis, ATP synthesis in the catalytic domain of F(1) is coupled via a rotary mechanism of the central stalk subunits to proton translocation. Its function is as follows. Key component of the F(0) channel; it plays a direct role in translocation across the membrane. A homomeric c-ring of between 10-14 subunits forms the central stalk rotor element with the F(1) delta and epsilon subunits. The polypeptide is ATP synthase subunit c (Gloeobacter violaceus (strain ATCC 29082 / PCC 7421)).